The primary structure comprises 426 residues: MKRLIAWLSDLRVAIVLLFLIALASAVGTAIPQGDAPRSYVEAYATRPWLGLLNGEQVLQLQLDHVYSSVWFLSLLAWLGLALILCSWRRQWPALQAARRWIDYSNPRQLSKLAIAESLPCTDSNSALQAFSTVLSQQGWRLERKDNRLAARKGTAGRVGPLLVHTGLILLMLGAVWGVLAGNRLERFLAPGRTLDLLSRDGDSQVSILLEAFQVDRDPAGRAEQFRSQLHLEENGNSLDREISVNHPLRHRGITIYQADWSLAAITLQIGRSPQLQLALRSFPELGEQVWGLVLPTRPDGSEPVFLSVENEQGPINIFDTDGTLLTLLRPGGPAVDVKGLPMRVNSVLPASGLLLKRDPGVPLVYLGFAVMLIGGGLSLIATRQLWAIASEGQLHVGGLCNRNLTAFSKELPSLLRQTALAHQQG.

The next 3 membrane-spanning stretches (helical) occupy residues 11 to 31, 69 to 89, and 159 to 179; these read LRVA…GTAI, SVWF…CSWR, and VGPL…VWGV.

The protein belongs to the Ccs1/CcsB family. As to quaternary structure, may interact with CcsA.

The protein localises to the cellular thylakoid membrane. Required during biogenesis of c-type cytochromes (cytochrome c6 and cytochrome f) at the step of heme attachment. The sequence is that of Cytochrome c biogenesis protein CcsB from Synechococcus sp. (strain CC9902).